Consider the following 546-residue polypeptide: CTP synthase (546 aa).

Residues 1-266 (MTTRYIFVTG…DQLVTKRFGI (266 aa)) form an amidoligase domain region. Serine 14 lines the CTP pocket. Residue serine 14 coordinates UTP. Residues 15–20 (SLGKGI) and aspartate 72 contribute to the ATP site. Mg(2+) contacts are provided by aspartate 72 and glutamate 140. Residues 147–149 (DIE), 187–192 (KTKPTQ), and lysine 223 each bind CTP. UTP is bound by residues 187 to 192 (KTKPTQ) and lysine 223. Position 239 to 241 (239 to 241 (KDV)) interacts with ATP. One can recognise a Glutamine amidotransferase type-1 domain in the interval 291–542 (TIGMVGKYIE…VAAAAAYQKR (252 aa)). Glycine 352 is a binding site for L-glutamine. The active-site Nucleophile; for glutamine hydrolysis is cysteine 379. L-glutamine-binding positions include 380–383 (LGMQ), glutamate 403, and arginine 470. Residues histidine 515 and glutamate 517 contribute to the active site.

This sequence belongs to the CTP synthase family. Homotetramer.

The enzyme catalyses UTP + L-glutamine + ATP + H2O = CTP + L-glutamate + ADP + phosphate + 2 H(+). It catalyses the reaction L-glutamine + H2O = L-glutamate + NH4(+). The catalysed reaction is UTP + NH4(+) + ATP = CTP + ADP + phosphate + 2 H(+). It participates in pyrimidine metabolism; CTP biosynthesis via de novo pathway; CTP from UDP: step 2/2. Its activity is regulated as follows. Allosterically activated by GTP, when glutamine is the substrate; GTP has no effect on the reaction when ammonia is the substrate. The allosteric effector GTP functions by stabilizing the protein conformation that binds the tetrahedral intermediate(s) formed during glutamine hydrolysis. Inhibited by the product CTP, via allosteric rather than competitive inhibition. Its function is as follows. Catalyzes the ATP-dependent amination of UTP to CTP with either L-glutamine or ammonia as the source of nitrogen. Regulates intracellular CTP levels through interactions with the four ribonucleotide triphosphates. This chain is CTP synthase, found in Shewanella pealeana (strain ATCC 700345 / ANG-SQ1).